We begin with the raw amino-acid sequence, 185 residues long: Large ribosomal subunit protein bL25 (185 aa).

It belongs to the bacterial ribosomal protein bL25 family. CTC subfamily. As to quaternary structure, part of the 50S ribosomal subunit; part of the 5S rRNA/L5/L18/L25 subcomplex. Contacts the 5S rRNA. Binds to the 5S rRNA independently of L5 and L18.

Functionally, this is one of the proteins that binds to the 5S RNA in the ribosome where it forms part of the central protuberance. The polypeptide is Large ribosomal subunit protein bL25 (Chlamydia pneumoniae (Chlamydophila pneumoniae)).